The primary structure comprises 259 residues: Proteasome subunit alpha (259 aa).

The tract at residues 226–259 (LAEGSATSATSATPGEAEAPATAPEGDVDTGSNG) is disordered. A compositionally biased stretch (low complexity) spans 227 to 250 (AEGSATSATSATPGEAEAPATAPE).

The protein belongs to the peptidase T1A family. The 20S proteasome core is composed of 14 alpha and 14 beta subunits that assemble into four stacked heptameric rings, resulting in a barrel-shaped structure. The two inner rings, each composed of seven catalytic beta subunits, are sandwiched by two outer rings, each composed of seven alpha subunits. The catalytic chamber with the active sites is on the inside of the barrel. Has a gated structure, the ends of the cylinder being occluded by the N-termini of the alpha-subunits. Is capped by the proteasome-associated ATPase, ARC.

It is found in the cytoplasm. It functions in the pathway protein degradation; proteasomal Pup-dependent pathway. Its activity is regulated as follows. The formation of the proteasomal ATPase ARC-20S proteasome complex, likely via the docking of the C-termini of ARC into the intersubunit pockets in the alpha-rings, may trigger opening of the gate for substrate entry. Interconversion between the open-gate and close-gate conformations leads to a dynamic regulation of the 20S proteasome proteolysis activity. Its function is as follows. Component of the proteasome core, a large protease complex with broad specificity involved in protein degradation. In Streptosporangium roseum (strain ATCC 12428 / DSM 43021 / JCM 3005 / KCTC 9067 / NCIMB 10171 / NRRL 2505 / NI 9100), this protein is Proteasome subunit alpha.